The sequence spans 381 residues: Sulfofructose kinase (381 aa).

ATP contacts are provided by residues G10, R72–Y73, and G100–T103. N101 is a Mg(2+) binding site. Residue D131 is the Proton acceptor of the active site.

The protein belongs to the phosphofructokinase type A (PFKA) family. Mg(2+) is required as a cofactor.

It catalyses the reaction 6-deoxy-6-sulfo-D-fructose + ATP = 6-deoxy-6-sulfo-D-fructose 1-phosphate + ADP + H(+). Functionally, part of the sulfo-EMP2 pathway, a D-sulfoquinovose degradation pathway that produces sulfolactate (SL). Phosphorylates 6-deoxy-6-sulfo-D-fructose (SF) to 6-deoxy-6-sulfo-D-fructose 1-phosphate (SFP). The sequence is that of Sulfofructose kinase from Alkalicoccus urumqiensis (Bacillus urumqiensis).